Reading from the N-terminus, the 292-residue chain is Phosphoribosylglycinamide formyltransferase, chloroplastic (292 aa).

A chloroplast-targeting transit peptide spans 1–65 (MESRVLFSSQ…KAASSTPQIV (65 aa)). 88 to 90 (GSN) provides a ligand contact to N(1)-(5-phospho-beta-D-ribosyl)glycinamide. (6R)-10-formyltetrahydrofolate-binding positions include 167-170 (LKLI) and Asn-184. The active-site Proton donor is His-186. A (6R)-10-formyltetrahydrofolate-binding site is contributed by Asp-227. Glu-256 is a N(1)-(5-phospho-beta-D-ribosyl)glycinamide binding site.

It belongs to the GART family.

The protein localises to the plastid. Its subcellular location is the chloroplast. It carries out the reaction N(1)-(5-phospho-beta-D-ribosyl)glycinamide + (6R)-10-formyltetrahydrofolate = N(2)-formyl-N(1)-(5-phospho-beta-D-ribosyl)glycinamide + (6S)-5,6,7,8-tetrahydrofolate + H(+). It functions in the pathway purine metabolism; IMP biosynthesis via de novo pathway; N(2)-formyl-N(1)-(5-phospho-D-ribosyl)glycinamide from N(1)-(5-phospho-D-ribosyl)glycinamide (10-formyl THF route): step 1/1. This chain is Phosphoribosylglycinamide formyltransferase, chloroplastic (PUR3), found in Arabidopsis thaliana (Mouse-ear cress).